Consider the following 120-residue polypeptide: Large ribosomal subunit protein bL12 (120 aa).

It belongs to the bacterial ribosomal protein bL12 family. Homodimer. Part of the ribosomal stalk of the 50S ribosomal subunit. Forms a multimeric L10(L12)X complex, where L10 forms an elongated spine to which 2 to 4 L12 dimers bind in a sequential fashion. Binds GTP-bound translation factors.

Functionally, forms part of the ribosomal stalk which helps the ribosome interact with GTP-bound translation factors. Is thus essential for accurate translation. This is Large ribosomal subunit protein bL12 from Listeria innocua serovar 6a (strain ATCC BAA-680 / CLIP 11262).